The chain runs to 390 residues: Trehalose-phosphate phosphatase (390 aa).

Catalysis depends on D150, which acts as the Nucleophile. Residues D150, D152, and D333 each coordinate Mg(2+). Position 150-152 (150-152 (DFD)) interacts with substrate.

This sequence belongs to the trehalose phosphatase family. Mg(2+) serves as cofactor.

The enzyme catalyses alpha,alpha-trehalose 6-phosphate + H2O = alpha,alpha-trehalose + phosphate. It participates in glycan biosynthesis; trehalose biosynthesis. Removes the phosphate from trehalose 6-phosphate to produce free trehalose. In Mycobacterium marinum (strain ATCC BAA-535 / M), this protein is Trehalose-phosphate phosphatase (otsB).